A 103-amino-acid chain; its full sequence is Small ribosomal subunit protein uS10 (103 aa).

This sequence belongs to the universal ribosomal protein uS10 family. In terms of assembly, part of the 30S ribosomal subunit.

Functionally, involved in the binding of tRNA to the ribosomes. This chain is Small ribosomal subunit protein uS10, found in Neisseria gonorrhoeae (strain NCCP11945).